The primary structure comprises 308 residues: Bacitracin transport ATP-binding protein BcrA (308 aa).

One can recognise an ABC transporter domain in the interval 8–236 (IETENLTKQY…NRKYTEFDVS (229 aa)). 40-47 (GRNGAGKT) is a binding site for ATP.

The protein belongs to the ABC transporter superfamily. In terms of assembly, the complex is probably composed of two ATP-binding proteins (BcrA) and two transmembrane proteins (BcrB).

Its function is as follows. Essential for high-level bacitracin resistance. Part of the ABC transporter complex BcrAB. Probably responsible for energy coupling to the transport system. The protein is Bacitracin transport ATP-binding protein BcrA of Enterococcus faecalis (Streptococcus faecalis).